The following is a 401-amino-acid chain: Serine/threonine transporter SstT (401 aa).

A run of 8 helical transmembrane segments spans residues 17-37 (IGIG…ITVI), 40-60 (FGSL…LTLV), 78-98 (VICL…GASY), 138-158 (ALAT…GLAF), 179-199 (VVGW…FDTI), 212-232 (LLLL…NPLI), 295-315 (MAGA…TLGI), and 336-356 (ASGV…LFGI).

It belongs to the dicarboxylate/amino acid:cation symporter (DAACS) (TC 2.A.23) family.

Its subcellular location is the cell membrane. It carries out the reaction L-serine(in) + Na(+)(in) = L-serine(out) + Na(+)(out). The catalysed reaction is L-threonine(in) + Na(+)(in) = L-threonine(out) + Na(+)(out). Functionally, involved in the import of serine and threonine into the cell, with the concomitant import of sodium (symport system). The chain is Serine/threonine transporter SstT from Streptococcus suis (strain 98HAH33).